Here is a 196-residue protein sequence, read N- to C-terminus: Peptidyl-tRNA hydrolase (196 aa).

Y18 serves as a coordination point for tRNA. The Proton acceptor role is filled by H23. Residues F69, N71, and N117 each contribute to the tRNA site.

Belongs to the PTH family. Monomer.

It localises to the cytoplasm. The catalysed reaction is an N-acyl-L-alpha-aminoacyl-tRNA + H2O = an N-acyl-L-amino acid + a tRNA + H(+). Functionally, hydrolyzes ribosome-free peptidyl-tRNAs (with 1 or more amino acids incorporated), which drop off the ribosome during protein synthesis, or as a result of ribosome stalling. Its function is as follows. Catalyzes the release of premature peptidyl moieties from peptidyl-tRNA molecules trapped in stalled 50S ribosomal subunits, and thus maintains levels of free tRNAs and 50S ribosomes. This chain is Peptidyl-tRNA hydrolase, found in Aliivibrio fischeri (strain MJ11) (Vibrio fischeri).